We begin with the raw amino-acid sequence, 478 residues long: tRNA modification GTPase MnmE (478 aa).

Residues R36, E94, and K133 each coordinate (6S)-5-formyl-5,6,7,8-tetrahydrofolate. One can recognise a TrmE-type G domain in the interval 230–402 (GIHVVLAGRP…LVETLCAKVG (173 aa)). Position 240 (N240) interacts with K(+). Residues 240–245 (NAGKSS), 259–265 (TDVAGTT), and 284–287 (DTAG) each bind GTP. S244 serves as a coordination point for Mg(2+). K(+) contacts are provided by T259, V261, and T264. Residue T265 participates in Mg(2+) binding. K478 contacts (6S)-5-formyl-5,6,7,8-tetrahydrofolate.

It belongs to the TRAFAC class TrmE-Era-EngA-EngB-Septin-like GTPase superfamily. TrmE GTPase family. As to quaternary structure, homodimer. Heterotetramer of two MnmE and two MnmG subunits. The cofactor is K(+).

The protein localises to the cytoplasm. In terms of biological role, exhibits a very high intrinsic GTPase hydrolysis rate. Involved in the addition of a carboxymethylaminomethyl (cmnm) group at the wobble position (U34) of certain tRNAs, forming tRNA-cmnm(5)s(2)U34. The protein is tRNA modification GTPase MnmE of Psychrobacter cryohalolentis (strain ATCC BAA-1226 / DSM 17306 / VKM B-2378 / K5).